The sequence spans 378 residues: Cyclic di-GMP phosphodiesterase response regulator RpfG (378 aa).

Positions 29 to 147 (NIVIVDDQMS…ELRARCSNLL (119 aa)) constitute a Response regulatory domain. D80 carries the post-translational modification 4-aspartylphosphate. Residues 174–371 (VEERERETLS…LEQICGQFST (198 aa)) enclose the HD-GYP domain.

Interacts with a subset of GGDEF domain-containing proteins. Phosphorylated and activated by RpfC.

The protein resides in the cytoplasm. It carries out the reaction 3',3'-c-di-GMP + 2 H2O = 2 GMP + 2 H(+). In terms of biological role, member of the two-component regulatory system RpfG/RpfC, which is involved in the perception and response to the diffusible signaling factor (DSF), which is essential for cell-cell signaling. Detection of DSF leads to the positive regulation of biofilm dispersal and the production of virulence factors. Activated RpfG degrades cyclic di-GMP to GMP, leading to the activation of Clp, a global transcriptional regulator that regulates a large set of genes in DSF pathway. May also directly control genes involved in biofilm dispersal. This Xanthomonas campestris pv. campestris (strain 8004) protein is Cyclic di-GMP phosphodiesterase response regulator RpfG (rpfG).